The sequence spans 912 residues: E3 ubiquitin-protein ligase HACE1 (912 aa).

ANK repeat units lie at residues 23–55, 64–93, 97–126, 130–159, 163–192, 196–226, and 228–253; these read LPED…NSKF, VKRS…DPNY, SGCT…DVNI, EGLT…NVDV, MGQT…DINR, SGAT…YLPD, and NGVT…QHHP. Residues 577 to 912 enclose the HECT domain; the sequence is NCEKLKQGIA…HCGSYGYTMA (336 aa). Cys879 (glycyl thioester intermediate) is an active-site residue.

Its subcellular location is the golgi apparatus. It localises to the golgi stack membrane. The protein localises to the cytoplasm. The protein resides in the endoplasmic reticulum. It catalyses the reaction S-ubiquitinyl-[E2 ubiquitin-conjugating enzyme]-L-cysteine + [acceptor protein]-L-lysine = [E2 ubiquitin-conjugating enzyme]-L-cysteine + N(6)-ubiquitinyl-[acceptor protein]-L-lysine.. It functions in the pathway protein modification; protein ubiquitination. In terms of biological role, E3 ubiquitin-protein ligase involved in Golgi membrane fusion and regulation of small GTPases. Acts as a regulator of Golgi membrane dynamics during the cell cycle: recruited to Golgi membrane by Rab proteins and regulates postmitotic Golgi membrane fusion. Acts by mediating ubiquitination during mitotic Golgi disassembly, ubiquitination serving as a signal for Golgi reassembly later, after cell division. This chain is E3 ubiquitin-protein ligase HACE1 (hace1), found in Xenopus tropicalis (Western clawed frog).